The following is a 571-amino-acid chain: Proline--tRNA ligase (571 aa).

It belongs to the class-II aminoacyl-tRNA synthetase family. ProS type 1 subfamily. Homodimer.

It localises to the cytoplasm. The catalysed reaction is tRNA(Pro) + L-proline + ATP = L-prolyl-tRNA(Pro) + AMP + diphosphate. In terms of biological role, catalyzes the attachment of proline to tRNA(Pro) in a two-step reaction: proline is first activated by ATP to form Pro-AMP and then transferred to the acceptor end of tRNA(Pro). As ProRS can inadvertently accommodate and process non-cognate amino acids such as alanine and cysteine, to avoid such errors it has two additional distinct editing activities against alanine. One activity is designated as 'pretransfer' editing and involves the tRNA(Pro)-independent hydrolysis of activated Ala-AMP. The other activity is designated 'posttransfer' editing and involves deacylation of mischarged Ala-tRNA(Pro). The misacylated Cys-tRNA(Pro) is not edited by ProRS. This Haemophilus ducreyi (strain 35000HP / ATCC 700724) protein is Proline--tRNA ligase.